Consider the following 68-residue polypeptide: Small ribosomal subunit protein bS18c (68 aa).

Belongs to the bacterial ribosomal protein bS18 family. Part of the 30S ribosomal subunit.

The protein localises to the plastid. Its subcellular location is the chloroplast. In Cyanidium caldarium (Red alga), this protein is Small ribosomal subunit protein bS18c (rps18).